A 394-amino-acid polypeptide reads, in one-letter code: Elongation factor Tu 2 (394 aa).

The tr-type G domain maps to 10–204 (KPHVNVGTIG…ALDSYIPEPE (195 aa)). Positions 19–26 (GHVDHGKT) are G1. 19-26 (GHVDHGKT) lines the GTP pocket. T26 lines the Mg(2+) pocket. Positions 60-64 (GITIN) are G2. The interval 81–84 (DCPG) is G3. GTP is bound by residues 81 to 85 (DCPGH) and 136 to 139 (NKCD). Positions 136 to 139 (NKCD) are G4. The tract at residues 174–176 (SAL) is G5.

It belongs to the TRAFAC class translation factor GTPase superfamily. Classic translation factor GTPase family. EF-Tu/EF-1A subfamily. Monomer.

The protein localises to the cytoplasm. The enzyme catalyses GTP + H2O = GDP + phosphate + H(+). In terms of biological role, GTP hydrolase that promotes the GTP-dependent binding of aminoacyl-tRNA to the A-site of ribosomes during protein biosynthesis. This is Elongation factor Tu 2 from Shewanella sp. (strain MR-4).